We begin with the raw amino-acid sequence, 405 residues long: Arginine biosynthesis bifunctional protein ArgJ (405 aa).

Substrate-binding residues include T152, K178, T189, E276, N400, and T405. The active-site Nucleophile is the T189.

This sequence belongs to the ArgJ family. Heterotetramer of two alpha and two beta chains.

Its subcellular location is the cytoplasm. It catalyses the reaction N(2)-acetyl-L-ornithine + L-glutamate = N-acetyl-L-glutamate + L-ornithine. The catalysed reaction is L-glutamate + acetyl-CoA = N-acetyl-L-glutamate + CoA + H(+). Its pathway is amino-acid biosynthesis; L-arginine biosynthesis; L-ornithine and N-acetyl-L-glutamate from L-glutamate and N(2)-acetyl-L-ornithine (cyclic): step 1/1. It functions in the pathway amino-acid biosynthesis; L-arginine biosynthesis; N(2)-acetyl-L-ornithine from L-glutamate: step 1/4. Its function is as follows. Catalyzes two activities which are involved in the cyclic version of arginine biosynthesis: the synthesis of N-acetylglutamate from glutamate and acetyl-CoA as the acetyl donor, and of ornithine by transacetylation between N(2)-acetylornithine and glutamate. The protein is Arginine biosynthesis bifunctional protein ArgJ of Pseudomonas fluorescens (strain Pf0-1).